We begin with the raw amino-acid sequence, 462 residues long: Argininosuccinate lyase (462 aa).

The protein belongs to the lyase 1 family. Argininosuccinate lyase subfamily.

The protein localises to the cytoplasm. The enzyme catalyses 2-(N(omega)-L-arginino)succinate = fumarate + L-arginine. Its pathway is amino-acid biosynthesis; L-arginine biosynthesis; L-arginine from L-ornithine and carbamoyl phosphate: step 3/3. The protein is Argininosuccinate lyase of Caldicellulosiruptor saccharolyticus (strain ATCC 43494 / DSM 8903 / Tp8T 6331).